The sequence spans 664 residues: Prelamin-A/C (664 aa).

Methionine 1 is subject to N-acetylmethionine. The disordered stretch occupies residues 1 to 24; sequence METPSQRRATRSGAQASSTPLSPT. Positions 1 to 33 are head; the sequence is METPSQRRATRSGAQASSTPLSPTRITRLQEKE. An interaction with MLIP region spans residues 1–130; sequence METPSQRRAT…TKKEGDLMAA (130 aa). Threonine 3 is modified (phosphothreonine). The residue at position 5 (serine 5) is a Phosphoserine. At threonine 10 the chain carries Phosphothreonine. 2 positions are modified to phosphoserine: serine 12 and serine 18. Threonine 19 is modified (phosphothreonine). A Phosphoserine modification is found at serine 22. The region spanning 31-387 is the IF rod domain; it reads EKEDLQELND…KLLEGEEERL (357 aa). Lysine 32 bears the N6-acetyllysine; alternate mark. At lysine 32 the chain carries N6-succinyllysine; alternate. Residue lysine 32 forms a Glycyl lysine isopeptide (Lys-Gly) (interchain with G-Cter in SUMO2); alternate linkage. The coil 1A stretch occupies residues 34 to 70; the sequence is DLQELNDRLAVYIDRVRSLETENAGLRLRITESEEVV. Serine 51, serine 66, and serine 71 each carry phosphoserine. The segment at 71–80 is linker 1; sequence SREVSGIKSA. 2 positions are modified to N6-acetyllysine: lysine 78 and lysine 97. Residues 81 to 218 form a coil 1B region; the sequence is YEAELGDARK…NIYSEELRET (138 aa). Lysine 97 participates in a covalent cross-link: Glycyl lysine isopeptide (Lys-Gly) (interchain with G-Cter in SUMO2). Serine 107 carries the phosphoserine modification. N6-acetyllysine occurs at positions 108, 114, 123, 135, 144, and 155. An N6-acetyllysine; alternate modification is found at lysine 171. At lysine 171 the chain carries N6-succinyllysine; alternate. A Glycyl lysine isopeptide (Lys-Gly) (interchain with G-Cter in SUMO2); alternate cross-link involves residue lysine 171. 3 positions are modified to N6-acetyllysine: lysine 180, lysine 201, and lysine 208. A Glycyl lysine isopeptide (Lys-Gly) (interchain with G-Cter in SUMO2); alternate cross-link involves residue lysine 201. A Glycyl lysine isopeptide (Lys-Gly) (interchain with G-Cter in SUMO); alternate cross-link involves residue lysine 201. A Glycyl lysine isopeptide (Lys-Gly) (interchain with G-Cter in SUMO2) cross-link involves residue lysine 208. A Phosphoserine modification is found at serine 212. Residues lysine 219 and lysine 233 each participate in a glycyl lysine isopeptide (Lys-Gly) (interchain with G-Cter in SUMO2) cross-link. The linker 2 stretch occupies residues 219–242; the sequence is KRRHETRLVEIDNGKQREFESRLA. Residues lysine 233, lysine 260, lysine 265, and lysine 270 each carry the N6-acetyllysine modification. Residues 243-383 form a coil 2 region; it reads DALQDLRAQH…HAYRKLLEGE (141 aa). Residue lysine 260 forms a Glycyl lysine isopeptide (Lys-Gly) (interchain with G-Cter in SUMO2); alternate linkage. Lysine 270 is covalently cross-linked (Glycyl lysine isopeptide (Lys-Gly) (interchain with G-Cter in SUMO2); alternate). Residues serine 277, serine 282, serine 301, and serine 307 each carry the phosphoserine modification. Residue lysine 311 forms a Glycyl lysine isopeptide (Lys-Gly) (interchain with G-Cter in SUMO2); alternate linkage. 3 positions are modified to N6-acetyllysine: lysine 311, lysine 316, and lysine 341. Residues lysine 366 and lysine 378 each participate in a glycyl lysine isopeptide (Lys-Gly) (interchain with G-Cter in SUMO2) cross-link. The interval 384–442 is disordered; that stretch reads EERLRLSPSPTSQRSRGRASSHSSQTQSGGSVTKKRKLESSESRSSFSQHARTSGRVAV. The tail stretch occupies residues 384-664; sequence EERLRLSPSP…TQSPQNCSIM (281 aa). Phosphoserine occurs at positions 390, 392, 395, 398, 403, 404, 406, 407, and 414. The segment covering 403-414 has biased composition (low complexity); the sequence is SSHSSQTQSGGS. The residue at position 416 (threonine 416) is a Phosphothreonine. Residue lysine 417 is modified to N6-acetyllysine. Residues lysine 417 and lysine 420 each participate in a glycyl lysine isopeptide (Lys-Gly) (interchain with G-Cter in SUMO2) cross-link. A Nuclear localization signal motif is present at residues 417–422; sequence KKRKLE. Residues serine 423, serine 426, serine 429, and serine 431 each carry the phosphoserine modification. The LTD domain occupies 428–545; sequence SSFSQHARTS…EEVAMRKLVR (118 aa). Residue lysine 450 forms a Glycyl lysine isopeptide (Lys-Gly) (interchain with G-Cter in SUMO2); alternate linkage. 2 positions are modified to N6-acetyllysine: lysine 450 and lysine 457. Phosphoserine occurs at positions 458 and 463. Glycyl lysine isopeptide (Lys-Gly) (interchain with G-Cter in SUMO2) cross-links involve residues lysine 470 and lysine 486. Residue lysine 486 is modified to N6-acetyllysine. 2 positions are modified to phosphothreonine: threonine 496 and threonine 505. Phosphoserine is present on residues serine 533 and serine 546. Phosphothreonine is present on threonine 548. The tract at residues 555-577 is disordered; the sequence is DEDGDDLLHHHHGSHGSSSGDPA. Serine 568 and serine 571 each carry phosphoserine. Lysine 597 is covalently cross-linked (Glycyl lysine isopeptide (Lys-Gly) (interchain with G-Cter in SUMO2); alternate). Lysine 597 is covalently cross-linked (Glycyl lysine isopeptide (Lys-Gly) (interchain with G-Cter in SUMO1); alternate). The tract at residues 598 to 620 is disordered; it reads ASASSSGAQVGGSISSGSSASSV. Serine 612, serine 613, serine 616, and serine 619 each carry phosphoserine. Residues serine 625 and serine 628 are each glycosylated (O-linked (GlcNAc) serine). Phosphoserine is present on residues serine 628, serine 632, and serine 636. The propeptide at 647–661 is removed in Lamin-A/C form; the sequence is LLGNSRPRTQSPQNC. Cysteine methyl ester is present on cysteine 661. Cysteine 661 carries the S-farnesyl cysteine lipid modification. A propeptide spans 662–664 (removed in Prelamin-A/C form and in Lamin-A/C form); the sequence is SIM.

The protein belongs to the intermediate filament family. In terms of assembly, homodimer of lamin A and lamin C. Lamin dimers then assemble into dimeric head-to-tail polymers. Ultimately, two head-to-tail polymers assemble laterally into a protofilament with a uniformly shaped rod of 3.5 nm in diameter. Interacts with lamin-associated polypeptides IA, IB and TMPO-alpha, RB1 and with emerin. Interacts with SREBF1, SREBF2, SUN2 and TMEM43. Interacts with TMEM201. Proteolytically processed isoform A interacts with NARF. Interacts with SUN1. Interacts with MLIP. Interacts with DMPK; may regulate nuclear envelope stability. Interacts with SUV39H1; the interaction increases stability of SUV39H1. Interacts with SYNE2. Interacts with ITSN1 isoform 2. Interacts with IFFO1; enables the formation of an interior nucleoskeleton that is recruited to DNA double-strand breaks. As to quaternary structure, interacts with EMD. Interacts (via C-terminus) with LEMD2 (via N-terminus) (in vitro). Post-translationally, proteolytic cleavage of the C-terminal of 18 residues of prelamin-A/C results in the production of lamin-A/C. The prelamin-A/C maturation pathway includes farnesylation of CAAX motif by protein farnesyltransferase (FNTA and FNTB), removal of the last three amino acids (-AAX) by RCE1/FACE2 and/or ZMPSTE24, methylation of the C-terminal cysteine by ICMT and endoproteolytic removal of the last 15 C-terminal amino acids by ZMPSTE24. Proteolytic cleavage requires prior farnesylation and methylation, and absence of these blocks cleavage. Farnesylation of prelamin-A/C facilitates nuclear envelope targeting. In terms of processing, phosphorylation plays a key role in lamin organization, subcellular localization and nuclear envelope disintegration. Phosphorylation by CDK1 at Ser-22 and Ser-392 at the onset of mitosis drives lamin disassembly and nuclear envelope breakdown. Phosphorylation at Ser-22 and Ser-392 during interphase promotes localization to the nucleoplasm and regulates lamina assembly. Phosphorylation at Ser-22, Ser-392 and Ser-628 during interphase causes redistribution between the nucleus and the cytoplasm. Phosphorylation at Ser-22 by CDK1 regulates matrix stiffness. Phosphorylation status of Ser-22 determines its localization between double-strand break (DSB) sites and the nuclear matrix. Phosphorylated by ATR at Ser-282 in response to DNA damage, leading to lamin disassembly and nuclear envelope rupture. Phosphorylation also regulates stability in micronuclei arising from genome instability: phosphorylation at Ser-395 by ATR in response to genome instability and double-stranded DNA breaks primes LMNA for subsequent phosphorylation at Ser-392 by CDK1 and micronuclei envelope rupture. The rupture of micronuclear envelope triggers the cGAS-STING pathway thereby activating the type I interferon response and innate immunity. Post-translationally, acetylation by KAT8 is required for nuclear architecture. Sumoylation is necessary for the localization to the nuclear envelope.

It localises to the nucleus lamina. Its subcellular location is the nucleus envelope. It is found in the nucleus. The protein resides in the nucleoplasm. The protein localises to the nucleus matrix. Its function is as follows. Lamins are intermediate filament proteins that assemble into a filamentous meshwork, and which constitute the major components of the nuclear lamina, a fibrous layer on the nucleoplasmic side of the inner nuclear membrane. Lamins provide a framework for the nuclear envelope, bridging the nuclear envelope and chromatin, thereby playing an important role in nuclear assembly, chromatin organization, nuclear membrane and telomere dynamics. Lamin A and C also regulate matrix stiffness by conferring nuclear mechanical properties. The structural integrity of the lamina is strictly controlled by the cell cycle, as seen by the disintegration and formation of the nuclear envelope in prophase and telophase, respectively. Lamin A and C are present in equal amounts in the lamina of mammals. Also invoved in DNA repair: recruited by DNA repair proteins XRCC4 and IFFO1 to the DNA double-strand breaks (DSBs) to prevent chromosome translocation by immobilizing broken DNA ends. Required for normal development of peripheral nervous system and skeletal muscle and for muscle satellite cell proliferation. Required for osteoblastogenesis and bone formation. Also prevents fat infiltration of muscle and bone marrow, helping to maintain the volume and strength of skeletal muscle and bone. Required for cardiac homeostasis. In terms of biological role, prelamin-A/C can accelerate smooth muscle cell senescence. It acts to disrupt mitosis and induce DNA damage in vascular smooth muscle cells (VSMCs), leading to mitotic failure, genomic instability, and premature senescence. The protein is Prelamin-A/C (LMNA) of Sus scrofa (Pig).